The primary structure comprises 945 residues: Bifunctional glutamine synthetase adenylyltransferase/adenylyl-removing enzyme (945 aa).

The interval 1–441 is adenylyl removase; sequence MLPLSAALQT…VFNDLIGDDS (441 aa). The segment at 450–945 is adenylyl transferase; that stretch reads YQHYHSLWQD…VRASWAKWLG (496 aa).

This sequence belongs to the GlnE family. It depends on Mg(2+) as a cofactor.

The catalysed reaction is [glutamine synthetase]-O(4)-(5'-adenylyl)-L-tyrosine + phosphate = [glutamine synthetase]-L-tyrosine + ADP. It catalyses the reaction [glutamine synthetase]-L-tyrosine + ATP = [glutamine synthetase]-O(4)-(5'-adenylyl)-L-tyrosine + diphosphate. Functionally, involved in the regulation of glutamine synthetase GlnA, a key enzyme in the process to assimilate ammonia. When cellular nitrogen levels are high, the C-terminal adenylyl transferase (AT) inactivates GlnA by covalent transfer of an adenylyl group from ATP to specific tyrosine residue of GlnA, thus reducing its activity. Conversely, when nitrogen levels are low, the N-terminal adenylyl removase (AR) activates GlnA by removing the adenylyl group by phosphorolysis, increasing its activity. The regulatory region of GlnE binds the signal transduction protein PII (GlnB) which indicates the nitrogen status of the cell. In Serratia proteamaculans (strain 568), this protein is Bifunctional glutamine synthetase adenylyltransferase/adenylyl-removing enzyme.